A 348-amino-acid chain; its full sequence is Rhodopsin (348 aa).

Residues 1-33 are Extracellular-facing; it reads TEGPYFYVPMVNTTGIVRSPYEYPQYYLVNPAA. A glycan (N-linked (GlcNAc...) asparagine) is linked at asparagine 12. Residues 34–58 traverse the membrane as a helical segment; sequence YAVLGAYMFFLIILGFPINFLTLYV. Residues 59 to 70 are Cytoplasmic-facing; that stretch reads TLEHKKLRTPLN. A helical membrane pass occupies residues 71–93; it reads YILLNLAVADLFMVIGGFTTTMY. Topologically, residues 94 to 107 are extracellular; the sequence is SSMHGYFVLGRLGC. A disulfide bond links cysteine 107 and cysteine 184. The helical transmembrane segment at 108–130 threads the bilayer; that stretch reads NLEGFSATLGGMISLWSLAVLAI. The 'Ionic lock' involved in activated form stabilization motif lies at 131 to 133; the sequence is ERW. At 131–149 the chain is on the cytoplasmic side; sequence ERWVVVCKPISNFRFGENH. The chain crosses the membrane as a helical span at residues 150–170; sequence AIMGVSLTWTMALACTVPPLV. At 171-199 the chain is on the extracellular side; sequence GWSRYIPEGMQCSCGIDYYTRAEGFNNES. A glycan (N-linked (GlcNAc...) asparagine) is linked at asparagine 197. The helical transmembrane segment at 200–221 threads the bilayer; the sequence is FVLYMFFCHFMVPLIIIFFCYG. Residues 222-249 are Cytoplasmic-facing; sequence RLLCAVKEAAAAQQESETTQRAEREVTR. A helical transmembrane segment spans residues 250-271; it reads MVILMVIGYLVCWLPYASVAWF. Topologically, residues 272-283 are extracellular; that stretch reads IFTHQGSEFGPL. A helical membrane pass occupies residues 284–305; sequence FMTIPAFFAKSSSIYNPVIYIC. Lysine 293 carries the N6-(retinylidene)lysine modification. The Cytoplasmic segment spans residues 306–348; sequence MNKQFRNCMITTLFCGKNPFEGEEEGASSTKTEASSASSVSPA. Residue cysteine 320 is the site of S-palmitoyl cysteine attachment. The interval 327 to 348 is disordered; that stretch reads GEEEGASSTKTEASSASSVSPA. Positions 332-348 are enriched in low complexity; it reads ASSTKTEASSASSVSPA.

The protein belongs to the G-protein coupled receptor 1 family. Opsin subfamily. Post-translationally, phosphorylated on some or all of the serine and threonine residues present in the C-terminal region. Contains one covalently linked retinal chromophore.

The protein resides in the membrane. It localises to the cell projection. Its subcellular location is the cilium. The protein localises to the photoreceptor outer segment. In terms of biological role, photoreceptor required for image-forming vision at low light intensity. While most salt water fish species use retinal as chromophore, most freshwater fish use 3-dehydroretinal, or a mixture of retinal and 3-dehydroretinal. Light-induced isomerization of 11-cis to all-trans retinal triggers a conformational change that activates signaling via G-proteins. Subsequent receptor phosphorylation mediates displacement of the bound G-protein alpha subunit by arrestin and terminates signaling. The sequence is that of Rhodopsin (rho) from Neoniphon argenteus (Clearfin squirrelfish).